We begin with the raw amino-acid sequence, 802 residues long: MLVSYNWVKEFFQDFPLTAEELGEAITRTGIEIEGVEELSASLKNVVVGEVLSCERHPDAEKLNKCLVQTDEEEPVQIICGAPNVAAGQKVIVAKVGARLPGGLKIKRAKLRGEVSEGMICSLAELGFESKVVPKAYADGIYVLPEHVETGVSAITLLGLDDAILDMAITPNRADALSMNGVAHEVGAIIHQKPAQPTEPDVSEKGKADDFISVEVENPTETPYYAIKMVENIEIKESPLWLQTKLMKAGIRPHNNVVDVTNYINLLYGQPLHSFDYDKIGSKKIVVRSAKDQEEITTLDGEKRILQTGHTVITNGTEPIAIAGVMGGEFSEVTETTTTVALEGAIFSSSSVGKASRELYLRTEASIRYDKGSDAWKVEKALAHGGALIAELSGGTLVGGVVEVDNREKAVNKIETSLTRINRILGTEISLSEIETIFDRLGFVLEVKEDTLIIEVPTRRWDITIEADILEEVARIYGYDEIPVTLPATSTTGGLSDSQKARRVMRAYLEGAGLNQALTYSLTSKKDATRLALSDEKTVALSMPMSEEHSHLRTSIVPQLIRSASYNIARKNMDVALYEMGTVFYATEGDNLPIEQEHLAGLITGNWHTADWQKTPKPVDFFVLKGIVEGLVNKLGIEAELHWKQIEKEELHPGRTASIQLEGKEIGYLGALHPAVEASYDLKETYVFEINVKALLDATKEKVVYHPIPRYPEMTRDLALLVDKDTDHATISQVIKEHGGNLLVDIELFDIFEGESLGENKKSLAYTLTFLDSERTLVEEDVQKATNKVVEALQAKLHAIIR.

Residues 40–155 (SASLKNVVVG…EHVETGVSAI (116 aa)) form the tRNA-binding domain. The region spanning 409–484 (KAVNKIETSL…RIYGYDEIPV (76 aa)) is the B5 domain. The Mg(2+) site is built by Asp-462, Asp-468, Glu-471, and Glu-472. In terms of domain architecture, FDX-ACB spans 709–802 (PRYPEMTRDL…LQAKLHAIIR (94 aa)).

It belongs to the phenylalanyl-tRNA synthetase beta subunit family. Type 1 subfamily. Tetramer of two alpha and two beta subunits. Mg(2+) is required as a cofactor.

The protein resides in the cytoplasm. It catalyses the reaction tRNA(Phe) + L-phenylalanine + ATP = L-phenylalanyl-tRNA(Phe) + AMP + diphosphate + H(+). This Listeria innocua serovar 6a (strain ATCC BAA-680 / CLIP 11262) protein is Phenylalanine--tRNA ligase beta subunit.